The following is a 165-amino-acid chain: Large ribosomal subunit protein uL10 (165 aa).

This sequence belongs to the universal ribosomal protein uL10 family. As to quaternary structure, part of the ribosomal stalk of the 50S ribosomal subunit. The N-terminus interacts with L11 and the large rRNA to form the base of the stalk. The C-terminus forms an elongated spine to which L12 dimers bind in a sequential fashion forming a multimeric L10(L12)X complex.

Its function is as follows. Forms part of the ribosomal stalk, playing a central role in the interaction of the ribosome with GTP-bound translation factors. The protein is Large ribosomal subunit protein uL10 of Buchnera aphidicola subsp. Acyrthosiphon pisum (strain 5A).